The primary structure comprises 117 residues: Large ribosomal subunit protein uL18 (117 aa).

It belongs to the universal ribosomal protein uL18 family. In terms of assembly, part of the 50S ribosomal subunit; part of the 5S rRNA/L5/L18/L25 subcomplex. Contacts the 5S and 23S rRNAs.

In terms of biological role, this is one of the proteins that bind and probably mediate the attachment of the 5S RNA into the large ribosomal subunit, where it forms part of the central protuberance. This Klebsiella pneumoniae subsp. pneumoniae (strain ATCC 700721 / MGH 78578) protein is Large ribosomal subunit protein uL18.